Consider the following 419-residue polypeptide: Gamma-glutamyl phosphate reductase (419 aa).

Belongs to the gamma-glutamyl phosphate reductase family.

It is found in the cytoplasm. It carries out the reaction L-glutamate 5-semialdehyde + phosphate + NADP(+) = L-glutamyl 5-phosphate + NADPH + H(+). Its pathway is amino-acid biosynthesis; L-proline biosynthesis; L-glutamate 5-semialdehyde from L-glutamate: step 2/2. Functionally, catalyzes the NADPH-dependent reduction of L-glutamate 5-phosphate into L-glutamate 5-semialdehyde and phosphate. The product spontaneously undergoes cyclization to form 1-pyrroline-5-carboxylate. This Bordetella bronchiseptica (strain ATCC BAA-588 / NCTC 13252 / RB50) (Alcaligenes bronchisepticus) protein is Gamma-glutamyl phosphate reductase.